Here is a 658-residue protein sequence, read N- to C-terminus: Threonine--tRNA ligase (658 aa).

The 61-residue stretch at 1 to 61 folds into the TGS domain; that stretch reads MSDVRVIIQR…KDGETVEAVE (61 aa). Positions 259–554 are catalytic; it reads DHRKLGSELD…LLEHYAGAMP (296 aa). Zn(2+)-binding residues include cysteine 353, histidine 404, and histidine 531.

This sequence belongs to the class-II aminoacyl-tRNA synthetase family. As to quaternary structure, homodimer. The cofactor is Zn(2+).

It is found in the cytoplasm. It catalyses the reaction tRNA(Thr) + L-threonine + ATP = L-threonyl-tRNA(Thr) + AMP + diphosphate + H(+). Functionally, catalyzes the attachment of threonine to tRNA(Thr) in a two-step reaction: L-threonine is first activated by ATP to form Thr-AMP and then transferred to the acceptor end of tRNA(Thr). Also edits incorrectly charged L-seryl-tRNA(Thr). This Streptomyces coelicolor (strain ATCC BAA-471 / A3(2) / M145) protein is Threonine--tRNA ligase.